We begin with the raw amino-acid sequence, 100 residues long: Small ribosomal subunit protein uS14c (100 aa).

It belongs to the universal ribosomal protein uS14 family. Part of the 30S ribosomal subunit.

Its subcellular location is the plastid. It is found in the chloroplast. Its function is as follows. Binds 16S rRNA, required for the assembly of 30S particles. This Nymphaea alba (White water-lily) protein is Small ribosomal subunit protein uS14c.